A 655-amino-acid chain; its full sequence is Tumor necrosis factor receptor superfamily member 21 (655 aa).

Positions 1–41 (MGTSASSITALASCSRIAGQVGATMVAGSLLLLGFLSTITA) are cleaved as a signal peptide. Over 42-349 (QPEQKTLSLT…PHKHFDINEH (308 aa)) the chain is Extracellular. TNFR-Cys repeat units follow at residues 50 to 88 (LTGTYRHVDRTTGQVLTCDKCPAGTYVSEHCTNTSLRVC), 90 to 131 (SCPS…DREC), 133 to 167 (CPPGMYQSNGTCAPHTVCPVGWGVRKKGTENEDVR), and 170 to 211 (QCAR…DNVC). 9 disulfide bridges follow: C67–C80, C70–C88, C91–C106, C109–C123, C113–C131, C133–C144, C150–C168, C171–C186, and C192–C211. N-linked (GlcNAc...) asparagine glycosylation is present at N82. Disordered regions lie at residues 214–306 (HLSS…GPHH) and 318–338 (EATGEKSSTAIKAPKRGHPRQ). The span at 216-225 (SSSSTTPSSP) shows a compositional bias: low complexity. Composition is skewed to polar residues over residues 241-262 (VPSSTYEPQGMNSTDSNSTASV) and 276-302 (PDNTSSTSGKESTNRTLPNPPQLTHQQ). Residues N252, N278, and N289 are each glycosylated (N-linked (GlcNAc...) asparagine). The helical transmembrane segment at 350–370 (LPWMIVLFLLLVLVLIVVCSI) threads the bilayer. A lipid anchor (S-palmitoyl cysteine) is attached at C368. The Cytoplasmic portion of the chain corresponds to 371–655 (RKSSRTLKKG…SVYSHLPDLL (285 aa)). The Death domain maps to 415–498 (GIDILKLVAA…DVVEKIRGLM (84 aa)).

As to quaternary structure, associates with TRADD. Interacts with NGFR. Interacts with CASP8. In terms of processing, oxidized in response to reactive oxygen species (ROS), leading to endocytosis. In terms of tissue distribution, detected in brain (at protein level). Detected in corpus callosum oligodendrocytes. Detected in embryonic and adult brain.

Its subcellular location is the cell membrane. Functionally, promotes apoptosis, possibly via a pathway that involves the activation of NF-kappa-B. Can also promote apoptosis mediated by BAX and by the release of cytochrome c from the mitochondria into the cytoplasm. Trophic-factor deprivation triggers the cleavage of surface APP by beta-secretase to release sAPP-beta which is further cleaved to release an N-terminal fragment of APP (N-APP). Negatively regulates oligodendrocyte survival, maturation and myelination. Plays a role in signaling cascades triggered by stimulation of T-cell receptors, in the adaptive immune response and in the regulation of T-cell differentiation and proliferation. Negatively regulates T-cell responses and the release of cytokines such as IL4, IL5, IL10, IL13 and IFNG by Th2 cells. Negatively regulates the production of IgG, IgM and IgM in response to antigens. May inhibit the activation of JNK in response to T-cell stimulation. Also acts as a regulator of pyroptosis: recruits CASP8 in response to reactive oxygen species (ROS) and subsequent oxidation, leading to activation of GSDMC. In Rattus norvegicus (Rat), this protein is Tumor necrosis factor receptor superfamily member 21 (Tnfrsf21).